Reading from the N-terminus, the 306-residue chain is C-type lectin domain family 10 member A (306 aa).

At 1-37 the chain is on the cytoplasmic side; sequence MTMAYENFQNLGSEEKNQEAGKAPPQSFLCNILSWTH. Residues 38 to 58 traverse the membrane as a helical; Signal-anchor for type II membrane protein segment; that stretch reads LLLFSLGLSLLLLVVISVIGS. Residues 59-306 lie on the Extracellular side of the membrane; it reads QNSQLRRDLE…VCEMKLAKDS (248 aa). Residues asparagine 76 and asparagine 168 are each glycosylated (N-linked (GlcNAc...) asparagine). The C-type lectin domain occupies 174-300; it reads CCPLHWMEHE…QRPYRWVCEM (127 aa). 3 disulfide bridges follow: cysteine 175-cysteine 186, cysteine 203-cysteine 298, and cysteine 276-cysteine 290.

As to quaternary structure, homooligomer.

It is found in the membrane. Functionally, recognizes terminal galactose and N-acetylgalactosamine units. In Rattus norvegicus (Rat), this protein is C-type lectin domain family 10 member A (Clec10a).